The sequence spans 201 residues: Small ribosomal subunit protein uS4 (201 aa).

A disordered region spans residues Thr-22–Tyr-47. Residues Arg-93–Lys-153 form the S4 RNA-binding domain.

The protein belongs to the universal ribosomal protein uS4 family. In terms of assembly, part of the 30S ribosomal subunit. Contacts protein S5. The interaction surface between S4 and S5 is involved in control of translational fidelity.

One of the primary rRNA binding proteins, it binds directly to 16S rRNA where it nucleates assembly of the body of the 30S subunit. In terms of biological role, with S5 and S12 plays an important role in translational accuracy. This Limosilactobacillus fermentum (strain NBRC 3956 / LMG 18251) (Lactobacillus fermentum) protein is Small ribosomal subunit protein uS4.